The primary structure comprises 238 residues: TATA-box-binding protein (238 aa).

The interval 1–58 is disordered; that stretch reads MDLKLPPTNPTNPQQAKTFMKSIEEDEKNKAEDLDIIKKEDIDEPKQEDTTDGNGGGG. Residues 27 to 49 are compositionally biased toward basic and acidic residues; that stretch reads EKNKAEDLDIIKKEDIDEPKQED. 2 tandem repeats follow at residues 65–141 and 155–232.

It belongs to the TBP family. In terms of assembly, belongs to the TFIID complex together with the TBP-associated factors (TAFs). Binds DNA as monomer.

It is found in the nucleus. In terms of biological role, general transcription factor that functions at the core of the DNA-binding multiprotein factor TFIID. Binding of TFIID to the TATA box is the initial transcriptional step of the pre-initiation complex (PIC), playing a role in the activation of eukaryotic genes transcribed by RNA polymerase II. This is TATA-box-binding protein (TBP1) from Candida albicans (strain SC5314 / ATCC MYA-2876) (Yeast).